We begin with the raw amino-acid sequence, 760 residues long: Prolyl endopeptidase FAP (760 aa).

The Cytoplasmic segment spans residues M1 to W4. Residues L5–V25 form a helical; Signal-anchor for type II membrane protein membrane-spanning segment. Over L26–D760 the chain is Extracellular. N-linked (GlcNAc...) asparagine glycosylation is found at N49, N92, and N99. Substrate-binding residues include E203 and E204. N227 and N314 each carry an N-linked (GlcNAc...) asparagine glycan. Disulfide bonds link C321/C332, C438/C441, and C448/C466. Residues T481–K512 are a coiled coil. The active-site Charge relay system is the S624. C643 and C755 are joined by a disulfide. N-linked (GlcNAc...) asparagine glycosylation occurs at N679. Active-site charge relay system residues include D702 and H734.

The protein belongs to the peptidase S9B family. As to quaternary structure, homodimer; homodimerization is required for activity of both plasma membrane and soluble forms. The monomer is inactive. Heterodimer with DPP4. Interacts with PLAUR; the interaction occurs at the cell surface of invadopodia membranes. Interacts with ITGB1. Interacts with ITGA3. Associates with integrin alpha-3/beta-1; the association occurs in a collagen-dependent manner at the cell surface of invadopodia membranes. In terms of processing, N-glycosylated. Post-translationally, the N-terminus may be blocked.

The protein localises to the cell surface. It is found in the cell membrane. The protein resides in the cell projection. Its subcellular location is the lamellipodium membrane. It localises to the invadopodium membrane. The protein localises to the ruffle membrane. It is found in the membrane. The protein resides in the secreted. It carries out the reaction Release of an N-terminal dipeptide, Xaa-Yaa-|-Zaa-, from a polypeptide, preferentially when Yaa is Pro, provided Zaa is neither Pro nor hydroxyproline.. The catalysed reaction is Hydrolysis of Pro-|-Xaa &gt;&gt; Ala-|-Xaa in oligopeptides.. With respect to regulation, gelatinase activity is inhibited by serine-protease inhibitors, such as phenylmethylsulfonyl fluoride (PMSF), 4-(2-aminoethyl)-benzenesulfonyl fluoride hydrochloride (AEBSF), 4-amidino phenylsulfonyl fluoride (APSF) and diisopropyl fluorophosphate (DFP), N-ethylmaleimide (NEM) and phenylmethylsulfonyl fluoride (PMSF). Dipeptidyl peptidase activity is inhibited by 2,2'-azino-bis(3-ethylbenzthiazoline-6-sulfonic acid), diisopropylfluorophosphate (DFP). Prolyl endopeptidase activity is inhibited by the boronic acid peptide Ac-Gly-BoroPro, Ac-Gly-Pro-chloromethyl ketone and Thr-Ser-Gly-chloromethyl ketone. Functionally, cell surface glycoprotein serine protease that participates in extracellular matrix degradation and involved in many cellular processes including tissue remodeling, fibrosis, wound healing, inflammation and tumor growth. Both plasma membrane and soluble forms exhibit post-proline cleaving endopeptidase activity, with a marked preference for Ala/Ser-Gly-Pro-Ser/Asn/Ala consensus sequences, on substrate such as alpha-2-antiplasmin SERPINF2 and SPRY2. Degrade also gelatin, heat-denatured type I collagen, but not native collagen type I and IV, vibronectin, tenascin, laminin, fibronectin, fibrin or casein. Also has dipeptidyl peptidase activity, exhibiting the ability to hydrolyze the prolyl bond two residues from the N-terminus of synthetic dipeptide substrates provided that the penultimate residue is proline, with a preference for Ala-Pro, Ile-Pro, Gly-Pro, Arg-Pro and Pro-Pro. Natural neuropeptide hormones for dipeptidyl peptidase are the neuropeptide Y (NPY), peptide YY (PYY), substance P (TAC1) and brain natriuretic peptide 32 (NPPB). The plasma membrane form, in association with either DPP4, PLAUR or integrins, is involved in the pericellular proteolysis of the extracellular matrix (ECM), and hence promotes cell adhesion, migration and invasion through the ECM. Plays a role in tissue remodeling during development and wound healing. Participates in the cell invasiveness towards the ECM in malignant melanoma cancers. Enhances tumor growth progression by increasing angiogenesis, collagen fiber degradation and apoptosis and by reducing antitumor response of the immune system. Promotes glioma cell invasion through the brain parenchyma by degrading the proteoglycan brevican. Acts as a tumor suppressor in melanocytic cells through regulation of cell proliferation and survival in a serine protease activity-independent manner. The polypeptide is Prolyl endopeptidase FAP (Bos taurus (Bovine)).